Consider the following 170-residue polypeptide: Shikimate kinase (170 aa).

Residue Gly-11–Thr-16 coordinates ATP. Thr-15 is a Mg(2+) binding site. Substrate-binding residues include Asp-33, Arg-57, and Gly-80. An ATP-binding site is contributed by Arg-119. Arg-141 is a substrate binding site.

It belongs to the shikimate kinase family. In terms of assembly, monomer. The cofactor is Mg(2+).

The protein localises to the cytoplasm. It carries out the reaction shikimate + ATP = 3-phosphoshikimate + ADP + H(+). It functions in the pathway metabolic intermediate biosynthesis; chorismate biosynthesis; chorismate from D-erythrose 4-phosphate and phosphoenolpyruvate: step 5/7. Its function is as follows. Catalyzes the specific phosphorylation of the 3-hydroxyl group of shikimic acid using ATP as a cosubstrate. This Azobacteroides pseudotrichonymphae genomovar. CFP2 protein is Shikimate kinase.